The primary structure comprises 384 residues: N-acetylneuraminate epimerase (384 aa).

The signal sequence occupies residues 1-24; that stretch reads MMKTKYLLLPLLASSSLLSHMAFA. Kelch repeat units lie at residues 46–90, 92–145, 147–184, 185–230, 233–281, 303–352, and 354–383; these read KVYV…TVVG, NIFV…YSPD, KQVLFFGGYSKPLFDKYLADITRTDKKAQPEQWQKIVD, DYMG…VIDG, ITLI…IAGA, AQFE…SVKG, and VLMVGGERADRTASTKVYLVGLNNNQIDIV. Glu-239 acts as the Proton acceptor in catalysis.

This sequence belongs to the NanM family. As to quaternary structure, homodimer.

It localises to the periplasm. It carries out the reaction N-acetyl-alpha-neuraminate = N-acetyl-beta-neuraminate. Its function is as follows. Converts alpha-N-acetylneuranimic acid (Neu5Ac) to the beta-anomer, accelerating the equilibrium between the alpha- and beta-anomers. Probably facilitates sialidase-negative bacteria to compete successfully for limited amounts of extracellular Neu5Ac, which is likely taken up in the beta-anomer. In addition, the rapid removal of sialic acid from solution might be advantageous to the bacterium to damp down host responses. The sequence is that of N-acetylneuraminate epimerase from Vibrio vulnificus (strain YJ016).